A 279-amino-acid chain; its full sequence is MTDTIVLNDISIGGGAPLVVIAGPCVIEDYDTTLQAAEFLKTVTDRLGIPFIFKASYDKANRSSVHSFRGPGPDLGLDILRRVKERLHVPVLSDVHTESQIGPAAQVLDIIQTPAFLCRQTDFITAVAATGKIINIKKGQFLAPWDITQVVEKARTAGNENILITERGAMFGYNNLVVDFRAIPIMQQQTGKPVIFDATHSVQLPGGQGTCSGGQREFVPCLARAAVAAGADGIFLEVHRNPDKALCDGPNSLPLEQVEPLLTALVAIRQAATEQAGHA.

Belongs to the KdsA family.

The protein resides in the cytoplasm. It catalyses the reaction D-arabinose 5-phosphate + phosphoenolpyruvate + H2O = 3-deoxy-alpha-D-manno-2-octulosonate-8-phosphate + phosphate. It participates in carbohydrate biosynthesis; 3-deoxy-D-manno-octulosonate biosynthesis; 3-deoxy-D-manno-octulosonate from D-ribulose 5-phosphate: step 2/3. It functions in the pathway bacterial outer membrane biogenesis; lipopolysaccharide biosynthesis. This is 2-dehydro-3-deoxyphosphooctonate aldolase from Desulfosudis oleivorans (strain DSM 6200 / JCM 39069 / Hxd3) (Desulfococcus oleovorans).